The sequence spans 474 residues: Dol-P-Glc:Glc(2)Man(9)GlcNAc(2)-PP-Dol alpha-1,2-glucosyltransferase (474 aa).

Topologically, residues methionine 1 to glycine 6 are cytoplasmic. The chain crosses the membrane as a helical span at residues tyrosine 7–phenylalanine 27. The Extracellular segment spans residues serine 28 to threonine 64. Residues leucine 65–tryptophan 85 form a helical membrane-spanning segment. The Cytoplasmic portion of the chain corresponds to serine 86–arginine 97. The chain crosses the membrane as a helical span at residues phenylalanine 98–isoleucine 118. The Extracellular portion of the chain corresponds to glutamine 119–serine 126. A helical membrane pass occupies residues serine 127 to asparagine 147. Residues phenylalanine 148–tyrosine 150 lie on the Cytoplasmic side of the membrane. The helical transmembrane segment at tyrosine 151 to asparagine 171 threads the bilayer. At histidine 172 to serine 175 the chain is on the extracellular side. The helical transmembrane segment at alanine 176–cysteine 196 threads the bilayer. Over alanine 197–tryptophan 256 the chain is Cytoplasmic. A helical membrane pass occupies residues proline 257–valine 277. The Extracellular segment spans residues glycine 278–histidine 283. A helical membrane pass occupies residues glutamate 284–phenylalanine 304. The Cytoplasmic segment spans residues proline 305–leucine 317. A helical transmembrane segment spans residues serine 318–valine 338. Residues tryptophan 339–glutamine 365 lie on the Extracellular side of the membrane. The helical transmembrane segment at arginine 366–alanine 386 threads the bilayer. Over aspartate 387–lysine 392 the chain is Cytoplasmic. The helical transmembrane segment at serine 393–leucine 413 threads the bilayer. Over leucine 414–serine 436 the chain is Extracellular. Residues arginine 437–leucine 457 form a helical membrane-spanning segment. At asparagine 458–methionine 473 the chain is on the cytoplasmic side.

This sequence belongs to the ALG10 glucosyltransferase family. Interacts with KCNH1; may regulate KCNH1, possibly by regulating its N-glycosylation. Interacts with KCNH2; may reduce KCNH2 sensitivity to classic proarrhythmic drug blockade, possibly by regulating its N-glycosylation. Highly expressed in brain, skeletal muscle, uterus, small intestine and liver. Moderately expressed in lung and kidney. Weakly expressed in heart and stomach.

The protein resides in the endoplasmic reticulum membrane. It carries out the reaction an alpha-D-Glc-(1-&gt;3)-alpha-D-Glc-(1-&gt;3)-alpha-D-Man-(1-&gt;2)-alpha-D-Man-(1-&gt;2)-alpha-D-Man-(1-&gt;3)-[alpha-D-Man-(1-&gt;2)-alpha-D-Man-(1-&gt;3)-[alpha-D-Man-(1-&gt;2)-alpha-D-Man-(1-&gt;6)]-alpha-D-Man-(1-&gt;6)]-beta-D-Man-(1-&gt;4)-beta-D-GlcNAc-(1-&gt;4)-alpha-D-GlcNAc-diphospho-di-trans,poly-cis-dolichol + a di-trans,poly-cis-dolichyl beta-D-glucosyl phosphate = a alpha-D-Glc-(1-&gt;2)-alpha-D-Glc-(1-&gt;3)-alpha-D-Glc-(1-&gt;3)-alpha-D-Man-(1-&gt;2)-alpha-D-Man-(1-&gt;2)-alpha-D-Man-(1-&gt;3)-[alpha-D-Man-(1-&gt;2)-alpha-D-Man-(1-&gt;3)-[alpha-D-Man-(1-&gt;2)-alpha-D-Man-(1-&gt;6)]-alpha-D-Man-(1-&gt;6)]-beta-D-Man-(1-&gt;4)-beta-D-GlcNAc-(1-&gt;4)-alpha-D-GlcNAc-diphospho-di-trans,poly-cis-dolichol + a di-trans,poly-cis-dolichyl phosphate + H(+). The protein operates within protein modification; protein glycosylation. Functionally, dol-P-Glc:Glc(2)Man(9)GlcNAc(2)-PP-Dol alpha-1,2-glucosyltransferase that operates in the biosynthetic pathway of dolichol-linked oligosaccharides, the glycan precursors employed in protein asparagine (N)-glycosylation. The assembly of dolichol-linked oligosaccharides begins on the cytosolic side of the endoplasmic reticulum membrane and finishes in its lumen. The sequential addition of sugars to dolichol pyrophosphate produces dolichol-linked oligosaccharides containing fourteen sugars, including two GlcNAcs, nine mannoses and three glucoses. Once assembled, the oligosaccharide is transferred from the lipid to nascent proteins by oligosaccharyltransferases. In the lumen of the endoplasmic reticulum, adds the third and last glucose residue from dolichyl phosphate glucose (Dol-P-Glc) onto the lipid-linked oligosaccharide intermediate Glc(2)Man(9)GlcNAc(2)-PP-Dol to produce Glc(3)Man(9)GlcNAc(2)-PP-Dol. The polypeptide is Dol-P-Glc:Glc(2)Man(9)GlcNAc(2)-PP-Dol alpha-1,2-glucosyltransferase (Rattus norvegicus (Rat)).